Reading from the N-terminus, the 226-residue chain is Putative N-acetylmannosamine-6-phosphate 2-epimerase 1 (226 aa).

Belongs to the NanE family.

It carries out the reaction an N-acyl-D-glucosamine 6-phosphate = an N-acyl-D-mannosamine 6-phosphate. It functions in the pathway amino-sugar metabolism; N-acetylneuraminate degradation; D-fructose 6-phosphate from N-acetylneuraminate: step 3/5. Functionally, converts N-acetylmannosamine-6-phosphate (ManNAc-6-P) to N-acetylglucosamine-6-phosphate (GlcNAc-6-P). The protein is Putative N-acetylmannosamine-6-phosphate 2-epimerase 1 (nanE1) of Salmonella typhimurium (strain LT2 / SGSC1412 / ATCC 700720).